We begin with the raw amino-acid sequence, 576 residues long: Arginine--tRNA ligase (576 aa).

The 'HIGH' region motif lies at 122 to 132 (PNVAKEMHVGH).

This sequence belongs to the class-I aminoacyl-tRNA synthetase family. As to quaternary structure, monomer.

It localises to the cytoplasm. It catalyses the reaction tRNA(Arg) + L-arginine + ATP = L-arginyl-tRNA(Arg) + AMP + diphosphate. The protein is Arginine--tRNA ligase of Photobacterium profundum (strain SS9).